Reading from the N-terminus, the 334-residue chain is Dolichyl-phosphate beta-glucosyltransferase (334 aa).

Residues 1–12 are Lumenal-facing; that stretch reads MRALRFLIENRN. Residues 13 to 33 form a helical membrane-spanning segment; it reads TVFFTLLVALVLSLYLLVYLF. Residues 34–334 lie on the Cytoplasmic side of the membrane; sequence SHTPRPPYPE…LGIYRDNKKC (301 aa).

This sequence belongs to the glycosyltransferase 2 family.

The protein resides in the endoplasmic reticulum membrane. The catalysed reaction is a di-trans,poly-cis-dolichyl phosphate + UDP-alpha-D-glucose = a di-trans,poly-cis-dolichyl beta-D-glucosyl phosphate + UDP. Its pathway is protein modification; protein glycosylation. Functionally, endoplasmic reticulum membrane-bound UDP-glucose:dolichyl-phosphate glucosyltransferase involved in protein N-linked glycosylation. The chain is Dolichyl-phosphate beta-glucosyltransferase from Saccharomyces cerevisiae (strain ATCC 204508 / S288c) (Baker's yeast).